The primary structure comprises 247 residues: Adenosylcobinamide-GDP ribazoletransferase (247 aa).

A run of 5 helical transmembrane segments spans residues 34–54 (IITFPLIGLLLGAISGLVFMV), 59–79 (CGAPLAALFSVLVLVLMTGGF), 113–133 (GGLALIFVVLAKILVLSELAL), 138–158 (ILASLAAACAVSRGTAALLMY), and 194–214 (VLLPGMHGVAAMVVTMVAIFI).

Belongs to the CobS family. It depends on Mg(2+) as a cofactor.

Its subcellular location is the cell inner membrane. The catalysed reaction is alpha-ribazole + adenosylcob(III)inamide-GDP = adenosylcob(III)alamin + GMP + H(+). It catalyses the reaction alpha-ribazole 5'-phosphate + adenosylcob(III)inamide-GDP = adenosylcob(III)alamin 5'-phosphate + GMP + H(+). It functions in the pathway cofactor biosynthesis; adenosylcobalamin biosynthesis; adenosylcobalamin from cob(II)yrinate a,c-diamide: step 7/7. In terms of biological role, joins adenosylcobinamide-GDP and alpha-ribazole to generate adenosylcobalamin (Ado-cobalamin). Also synthesizes adenosylcobalamin 5'-phosphate from adenosylcobinamide-GDP and alpha-ribazole 5'-phosphate. This Escherichia coli O157:H7 protein is Adenosylcobinamide-GDP ribazoletransferase.